A 325-amino-acid chain; its full sequence is Geranylgeranyl transferase type-2 subunit beta (325 aa).

PFTB repeat units lie at residues 9–50 (KEKH…CVLD), 57–99 (KEEV…ATYD), 109–150 (KVRL…SILG), 157–198 (VDPA…AIAN), 208–249 (LEEI…AIIG), and 256–298 (YEKL…SLMG). Residues 183–185 (HAA) and 228–240 (RPSKLPDVCYSWW) each bind geranylgeranyl diphosphate. The Zn(2+) site is built by D234, C236, and H286.

It belongs to the protein prenyltransferase subunit beta family. In terms of assembly, heterodimer of an alpha and a beta subunit. Zn(2+) is required as a cofactor.

It carries out the reaction geranylgeranyl diphosphate + L-cysteinyl-[protein] = S-geranylgeranyl-L-cysteinyl-[protein] + diphosphate. Its function is as follows. Catalyzes the transfer of a geranyl-geranyl moiety from geranyl-geranyl pyrophosphate to proteins having the C-terminal -XCC or -XCXC, where both cysteines may become modified. Acts on YPT1 and SEC4. The chain is Geranylgeranyl transferase type-2 subunit beta (BET2) from Saccharomyces cerevisiae (strain ATCC 204508 / S288c) (Baker's yeast).